The chain runs to 121 residues: Ribosome-binding factor A (121 aa).

This sequence belongs to the RbfA family. In terms of assembly, monomer. Binds 30S ribosomal subunits, but not 50S ribosomal subunits or 70S ribosomes.

It localises to the cytoplasm. One of several proteins that assist in the late maturation steps of the functional core of the 30S ribosomal subunit. Associates with free 30S ribosomal subunits (but not with 30S subunits that are part of 70S ribosomes or polysomes). Required for efficient processing of 16S rRNA. May interact with the 5'-terminal helix region of 16S rRNA. This Paraburkholderia xenovorans (strain LB400) protein is Ribosome-binding factor A.